Here is a 500-residue protein sequence, read N- to C-terminus: Glycerol kinase (500 aa).

Residue T13 participates in ADP binding. T13, T14, and S15 together coordinate ATP. Residue T13 coordinates sn-glycerol 3-phosphate. R17 contacts ADP. 4 residues coordinate sn-glycerol 3-phosphate: R83, E84, Y135, and D245. Glycerol contacts are provided by R83, E84, Y135, D245, and Q246. 2 residues coordinate ADP: T267 and G310. ATP is bound by residues T267, G310, Q314, and G411. ADP contacts are provided by G411 and N415.

It belongs to the FGGY kinase family. In terms of assembly, homotetramer and homodimer (in equilibrium).

It catalyses the reaction glycerol + ATP = sn-glycerol 3-phosphate + ADP + H(+). It functions in the pathway polyol metabolism; glycerol degradation via glycerol kinase pathway; sn-glycerol 3-phosphate from glycerol: step 1/1. With respect to regulation, activated by phosphorylation and inhibited by fructose 1,6-bisphosphate (FBP). Its function is as follows. Key enzyme in the regulation of glycerol uptake and metabolism. Catalyzes the phosphorylation of glycerol to yield sn-glycerol 3-phosphate. In Carboxydothermus hydrogenoformans (strain ATCC BAA-161 / DSM 6008 / Z-2901), this protein is Glycerol kinase.